The sequence spans 140 residues: Natriuretic peptides B (140 aa).

The N-terminal stretch at 1 to 26 is a signal peptide; that stretch reads MEPCAALPRALLLLLFLHLSPLGGRP. The interval 71–94 is disordered; sequence LEPLHRSHSPAEAPEAGGTPRGVL. C118 and C134 form a disulfide bridge.

It belongs to the natriuretic peptide family. The precursor molecule is proteolytically cleaved by the endoproteases FURIN or CORIN at Arg-108 to produce the brain natriuretic peptide 32. CORIN also cleaves the precursor molecule at additional residues including Arg-105, Arg-108 and possibly Lys-111. In terms of processing, undergoes further proteolytic cleavage by various proteases such as DPP4, MME and possibly FAP, to give rise to a variety of shorter peptides. Cleaved at Pro-110 by the prolyl endopeptidase FAP (seprase) activity (in vitro). Degraded by IDE. During IDE degradation, the resulting products initially increase the activation of NPR1 and can also stimulate NPR2 to produce cGMP before the fragments are completely degraded and inactivated by IDE (in vitro). Brain and also in atria, but at much lower levels than ANP.

Its subcellular location is the secreted. Functionally, cardiac hormone that plays a key role in mediating cardio-renal homeostasis. May also function as a paracrine antifibrotic factor in the heart. Acts by specifically binding and stimulating NPR1 to produce cGMP, which in turn activates effector proteins that drive various biological responses. Involved in regulating the extracellular fluid volume and maintaining the fluid-electrolyte balance through natriuresis, diuresis, vasorelaxation, and inhibition of renin and aldosterone secretion. Binds the clearance receptor NPR3. May affect cardio-renal homeostasis. Able to promote the production of cGMP although its potency is very low compared to brain natriuretic peptide 32. This chain is Natriuretic peptides B (NPPB), found in Canis lupus familiaris (Dog).